Reading from the N-terminus, the 279-residue chain is Thymidylate synthase (279 aa).

Residue 133–134 (RR) coordinates dUMP. The active-site Nucleophile is the C154. DUMP-binding positions include 178–181 (RSND), N189, and 219–221 (HIY). D181 contributes to the (6R)-5,10-methylene-5,6,7,8-tetrahydrofolate binding site. A278 lines the (6R)-5,10-methylene-5,6,7,8-tetrahydrofolate pocket.

This sequence belongs to the thymidylate synthase family. Bacterial-type ThyA subfamily. Homodimer.

It is found in the cytoplasm. The catalysed reaction is dUMP + (6R)-5,10-methylene-5,6,7,8-tetrahydrofolate = 7,8-dihydrofolate + dTMP. The protein operates within pyrimidine metabolism; dTTP biosynthesis. Functionally, catalyzes the reductive methylation of 2'-deoxyuridine-5'-monophosphate (dUMP) to 2'-deoxythymidine-5'-monophosphate (dTMP) while utilizing 5,10-methylenetetrahydrofolate (mTHF) as the methyl donor and reductant in the reaction, yielding dihydrofolate (DHF) as a by-product. This enzymatic reaction provides an intracellular de novo source of dTMP, an essential precursor for DNA biosynthesis. The sequence is that of Thymidylate synthase from Streptococcus gordonii (strain Challis / ATCC 35105 / BCRC 15272 / CH1 / DL1 / V288).